Consider the following 648-residue polypeptide: Beta-glucuronidase (648 aa).

A signal peptide spans 1-22 (MSPRRSVCWFVLGQLLCSCAVA). 2 N-linked (GlcNAc...) asparagine glycosylation sites follow: Asn172 and Asn416. The active-site Proton donor is the Glu447. Asn627 carries an N-linked (GlcNAc...) asparagine glycan.

The protein belongs to the glycosyl hydrolase 2 family. Homotetramer. Post-translationally, undergoes a post-transcriptional proteolytic cleavage near its C-terminal end, which reduces its size by approximately 3 kDa. The site of this cleavage has as yet not been determined.

Its subcellular location is the lysosome. It carries out the reaction a beta-D-glucuronoside + H2O = D-glucuronate + an alcohol. With respect to regulation, inhibited by L-aspartic acid. Functionally, plays an important role in the degradation of dermatan and keratan sulfates. The sequence is that of Beta-glucuronidase (Gusb) from Rattus norvegicus (Rat).